The primary structure comprises 234 residues: Phosphoribosylaminoimidazole-succinocarboxamide synthase (234 aa).

Belongs to the SAICAR synthetase family.

The enzyme catalyses 5-amino-1-(5-phospho-D-ribosyl)imidazole-4-carboxylate + L-aspartate + ATP = (2S)-2-[5-amino-1-(5-phospho-beta-D-ribosyl)imidazole-4-carboxamido]succinate + ADP + phosphate + 2 H(+). It participates in purine metabolism; IMP biosynthesis via de novo pathway; 5-amino-1-(5-phospho-D-ribosyl)imidazole-4-carboxamide from 5-amino-1-(5-phospho-D-ribosyl)imidazole-4-carboxylate: step 1/2. This is Phosphoribosylaminoimidazole-succinocarboxamide synthase from Streptococcus agalactiae serotype V (strain ATCC BAA-611 / 2603 V/R).